Here is a 254-residue protein sequence, read N- to C-terminus: Hydroxyacylglutathione hydrolase (254 aa).

Zn(2+) contacts are provided by H53, H55, D57, H58, H111, D128, and H166.

This sequence belongs to the metallo-beta-lactamase superfamily. Glyoxalase II family. In terms of assembly, monomer. The cofactor is Zn(2+).

The catalysed reaction is an S-(2-hydroxyacyl)glutathione + H2O = a 2-hydroxy carboxylate + glutathione + H(+). Its pathway is secondary metabolite metabolism; methylglyoxal degradation; (R)-lactate from methylglyoxal: step 2/2. Thiolesterase that catalyzes the hydrolysis of S-D-lactoyl-glutathione to form glutathione and D-lactic acid. In Aeromonas hydrophila subsp. hydrophila (strain ATCC 7966 / DSM 30187 / BCRC 13018 / CCUG 14551 / JCM 1027 / KCTC 2358 / NCIMB 9240 / NCTC 8049), this protein is Hydroxyacylglutathione hydrolase.